The sequence spans 259 residues: Ribosomal RNA small subunit methyltransferase J (259 aa).

S-adenosyl-L-methionine-binding positions include 107 to 108 (RD), 123 to 124 (ER), 159 to 160 (SS), and aspartate 177.

This sequence belongs to the methyltransferase superfamily. RsmJ family.

Its subcellular location is the cytoplasm. The catalysed reaction is guanosine(1516) in 16S rRNA + S-adenosyl-L-methionine = N(2)-methylguanosine(1516) in 16S rRNA + S-adenosyl-L-homocysteine + H(+). Its function is as follows. Specifically methylates the guanosine in position 1516 of 16S rRNA. This Shewanella loihica (strain ATCC BAA-1088 / PV-4) protein is Ribosomal RNA small subunit methyltransferase J.